Here is a 353-residue protein sequence, read N- to C-terminus: Ribosomal RNA small subunit methyltransferase H (353 aa).

Residues Gly-49–His-51, Asp-68, Phe-95, Asp-126, and Gln-133 contribute to the S-adenosyl-L-methionine site.

Belongs to the methyltransferase superfamily. RsmH family.

Its subcellular location is the cytoplasm. The catalysed reaction is cytidine(1402) in 16S rRNA + S-adenosyl-L-methionine = N(4)-methylcytidine(1402) in 16S rRNA + S-adenosyl-L-homocysteine + H(+). Specifically methylates the N4 position of cytidine in position 1402 (C1402) of 16S rRNA. The polypeptide is Ribosomal RNA small subunit methyltransferase H (Corynebacterium urealyticum (strain ATCC 43042 / DSM 7109)).